Here is a 280-residue protein sequence, read N- to C-terminus: NAD(+) hydrolase TirS (280 aa).

The stretch at 22-94 forms a coiled coil; that stretch reads MNKLPDEIDR…KINLQKEQSR (73 aa). A TIR domain is found at 141 to 275; the sequence is IEYDVFLSHS…EIVEKIYQVI (135 aa). Residues 150–151 and E180 each bind NAD(+); that span reads SS. The active site involves E216.

It is found in the secreted. The catalysed reaction is NAD(+) + H2O = ADP-D-ribose + nicotinamide + H(+). The enzyme catalyses NADP(+) + H2O = ADP-D-ribose 2'-phosphate + nicotinamide + H(+). Functionally, virulence factor that suppresses host Toll-like receptor 2 (TLR2)-mediated NF-kappa-B signaling upon infection. NAD(+) hydrolase (NADase) that catalyzes cleavage of NAD(+) into ADP-D-ribose (ADPR) and nicotinamide. Also able to hydrolyze NADP(+), but not other NAD(+)-related molecules. Able to reduce NAD(+) levels in host cells. The polypeptide is NAD(+) hydrolase TirS (Staphylococcus aureus (strain MSSA476)).